The primary structure comprises 246 residues: Bis(5'-nucleosyl)-tetraphosphatase PrpE [asymmetrical] (246 aa).

Belongs to the PrpE family. Ni(2+) is required as a cofactor.

It carries out the reaction P(1),P(4)-bis(5'-guanosyl) tetraphosphate + H2O = GMP + GTP + 2 H(+). In terms of biological role, asymmetrically hydrolyzes Ap4p to yield AMP and ATP. This Bacillus cereus (strain B4264) protein is Bis(5'-nucleosyl)-tetraphosphatase PrpE [asymmetrical].